Here is a 69-residue protein sequence, read N- to C-terminus: Putative antitoxin AF_1481 (69 aa).

This sequence belongs to the UPF0330 family.

Possibly the antitoxin component of a type II toxin-antitoxin (TA) system. This chain is Putative antitoxin AF_1481, found in Archaeoglobus fulgidus (strain ATCC 49558 / DSM 4304 / JCM 9628 / NBRC 100126 / VC-16).